The following is a 23-amino-acid chain: Basic phospholipase A2 homolog CTs-K49c (23 aa).

In terms of processing, contains 7 disulfide bonds. As to expression, expressed by the venom gland.

It is found in the secreted. Snake venom phospholipase A2 homolog that lacks catalytic activity. Shows myotoxic activities. Induces local edema a few hours after injection (5-10 ug) in the hind paw. In Trimeresurus stejnegeri (Chinese green tree viper), this protein is Basic phospholipase A2 homolog CTs-K49c.